The following is a 436-amino-acid chain: UDP-N-acetylmuramate--L-alanine ligase (436 aa).

110–116 is an ATP binding site; it reads GAHGKTS.

The protein belongs to the MurCDEF family.

It is found in the cytoplasm. The enzyme catalyses UDP-N-acetyl-alpha-D-muramate + L-alanine + ATP = UDP-N-acetyl-alpha-D-muramoyl-L-alanine + ADP + phosphate + H(+). The protein operates within cell wall biogenesis; peptidoglycan biosynthesis. Functionally, cell wall formation. The sequence is that of UDP-N-acetylmuramate--L-alanine ligase from Lacticaseibacillus casei (strain BL23) (Lactobacillus casei).